The primary structure comprises 454 residues: Bifunctional protein GlmU (454 aa).

The tract at residues 1-226 (MALNVVILAA…AIEVEGANNR (226 aa)) is pyrophosphorylase. UDP-N-acetyl-alpha-D-glucosamine contacts are provided by residues 8 to 11 (LAAG), K22, Q73, 78 to 79 (GT), 100 to 102 (YGD), G137, E151, N166, and N224. Position 102 (D102) interacts with Mg(2+). N224 provides a ligand contact to Mg(2+). The linker stretch occupies residues 227–247 (VQLAQLERAYQAREAEKLMLA). The N-acetyltransferase stretch occupies residues 248–454 (GANLRDPHRI…DWKRPVKIKK (207 aa)). UDP-N-acetyl-alpha-D-glucosamine is bound by residues R330 and K348. H360 (proton acceptor) is an active-site residue. UDP-N-acetyl-alpha-D-glucosamine contacts are provided by Y363 and N374. Residues A377, 383–384 (NY), S402, A420, and R437 contribute to the acetyl-CoA site.

In the N-terminal section; belongs to the N-acetylglucosamine-1-phosphate uridyltransferase family. This sequence in the C-terminal section; belongs to the transferase hexapeptide repeat family. As to quaternary structure, homotrimer. It depends on Mg(2+) as a cofactor.

It localises to the cytoplasm. It carries out the reaction alpha-D-glucosamine 1-phosphate + acetyl-CoA = N-acetyl-alpha-D-glucosamine 1-phosphate + CoA + H(+). The catalysed reaction is N-acetyl-alpha-D-glucosamine 1-phosphate + UTP + H(+) = UDP-N-acetyl-alpha-D-glucosamine + diphosphate. It functions in the pathway nucleotide-sugar biosynthesis; UDP-N-acetyl-alpha-D-glucosamine biosynthesis; N-acetyl-alpha-D-glucosamine 1-phosphate from alpha-D-glucosamine 6-phosphate (route II): step 2/2. Its pathway is nucleotide-sugar biosynthesis; UDP-N-acetyl-alpha-D-glucosamine biosynthesis; UDP-N-acetyl-alpha-D-glucosamine from N-acetyl-alpha-D-glucosamine 1-phosphate: step 1/1. The protein operates within bacterial outer membrane biogenesis; LPS lipid A biosynthesis. Functionally, catalyzes the last two sequential reactions in the de novo biosynthetic pathway for UDP-N-acetylglucosamine (UDP-GlcNAc). The C-terminal domain catalyzes the transfer of acetyl group from acetyl coenzyme A to glucosamine-1-phosphate (GlcN-1-P) to produce N-acetylglucosamine-1-phosphate (GlcNAc-1-P), which is converted into UDP-GlcNAc by the transfer of uridine 5-monophosphate (from uridine 5-triphosphate), a reaction catalyzed by the N-terminal domain. The protein is Bifunctional protein GlmU of Shewanella putrefaciens (strain CN-32 / ATCC BAA-453).